Here is a 154-residue protein sequence, read N- to C-terminus: Ribonuclease H (154 aa).

The 142-residue stretch at 1–142 (MRKQVEIFTD…CDELARAAAG (142 aa)) folds into the RNase H type-1 domain. Residues aspartate 10, glutamate 48, aspartate 70, and aspartate 134 each coordinate Mg(2+).

It belongs to the RNase H family. Monomer. Requires Mg(2+) as cofactor.

The protein localises to the cytoplasm. It catalyses the reaction Endonucleolytic cleavage to 5'-phosphomonoester.. Its function is as follows. Endonuclease that specifically degrades the RNA of RNA-DNA hybrids. This chain is Ribonuclease H, found in Pectobacterium carotovorum subsp. carotovorum (strain PC1).